The following is a 356-amino-acid chain: Putative methylthioribose-1-phosphate isomerase (356 aa).

Residues 57–59, arginine 100, and glutamine 206 contribute to the substrate site; that span reads RGA. The active-site Proton donor is aspartate 247. 257 to 258 provides a ligand contact to substrate; it reads NK.

Belongs to the eIF-2B alpha/beta/delta subunits family. MtnA subfamily.

The catalysed reaction is 5-(methylsulfanyl)-alpha-D-ribose 1-phosphate = 5-(methylsulfanyl)-D-ribulose 1-phosphate. Its function is as follows. Catalyzes the interconversion of methylthioribose-1-phosphate (MTR-1-P) into methylthioribulose-1-phosphate (MTRu-1-P). This is Putative methylthioribose-1-phosphate isomerase from Pyrococcus furiosus (strain ATCC 43587 / DSM 3638 / JCM 8422 / Vc1).